The sequence spans 466 residues: UDP-N-acetylglucosamine--dolichyl-phosphate N-acetylglucosaminephosphotransferase (466 aa).

Residues 12 to 32 (AAFAVAAHAPVLGLILLGSIV) form a helical membrane-spanning segment. D57 serves as a coordination point for UDP-N-acetyl-alpha-D-glucosamine. N-linked (GlcNAc...) asparagine glycosylation is present at N59. A UDP-N-acetyl-alpha-D-glucosamine-binding site is contributed by E90. The next 2 membrane-spanning stretches (helical) occupy residues 91 to 111 (SLGI…TVCL) and 124 to 144 (PYAS…LGFV). Residue K155 coordinates dolichyl phosphate. Transmembrane regions (helical) follow at residues 156–176 (IILT…SLSV) and 236–256 (GAAL…LCIF). Dolichyl phosphate is bound at residue 255-263 (IFCTNSINI). Position 262 (N262) interacts with Mg(2+). 4 helical membrane passes run 263–283 (ILAG…VASV), 316–336 (DHQL…LALW), 345–365 (VFVG…SSIT), and 374–394 (LFFA…FSIV). Position 268 (N268) interacts with UDP-N-acetyl-alpha-D-glucosamine. D349 lines the Mg(2+) pocket. A UDP-N-acetyl-alpha-D-glucosamine-binding site is contributed by 398–400 (RHR). A glycan (N-linked (GlcNAc...) asparagine) is linked at N416. Residues 442-462 (CQVIACVLGFVVRYVLSAFLY) traverse the membrane as a helical segment.

Belongs to the glycosyltransferase 4 family. Mg(2+) is required as a cofactor.

Its subcellular location is the endoplasmic reticulum membrane. It catalyses the reaction a di-trans,poly-cis-dolichyl phosphate + UDP-N-acetyl-alpha-D-glucosamine = an N-acetyl-alpha-D-glucosaminyl-diphospho-di-trans,poly-cis-dolichol + UMP. The protein operates within protein modification; protein glycosylation. Inhibited by natural nucleoside antibiotic tunicamycin, which acts as a structural analog and competitor of UDP-GlcNAc. UDP-N-acetylglucosamine--dolichyl-phosphate N-acetylglucosaminephosphotransferase that operates in the biosynthetic pathway of dolichol-linked oligosaccharides, the glycan precursors employed in protein asparagine (N)-glycosylation. The assembly of dolichol-linked oligosaccharides begins on the cytosolic side of the endoplasmic reticulum membrane and finishes in its lumen. The sequential addition of sugars to dolichol pyrophosphate produces dolichol-linked oligosaccharides containing fourteen sugars, including two GlcNAcs, nine mannoses and three glucoses. Once assembled, the oligosaccharide is transferred from the lipid to nascent proteins by oligosaccharyltransferases. Catalyzes the initial step of dolichol-linked oligosaccharide biosynthesis, transfering GlcNAc-1-P from cytosolic UDP-GlcNAc onto the carrier lipid dolichyl phosphate (P-dolichol), yielding GlcNAc-P-P-dolichol embedded in the cytoplasmic leaflet of the endoplasmic reticulum membrane. This Leishmania amazonensis protein is UDP-N-acetylglucosamine--dolichyl-phosphate N-acetylglucosaminephosphotransferase (NAGT).